The sequence spans 316 residues: tRNA pseudouridine synthase B (316 aa).

Residue D38 is the Nucleophile of the active site. The PUA domain occupies 238–312 (YPEVIVKSSA…PVCVLARQAG (75 aa)).

Belongs to the pseudouridine synthase TruB family. Type 1 subfamily.

It catalyses the reaction uridine(55) in tRNA = pseudouridine(55) in tRNA. Functionally, responsible for synthesis of pseudouridine from uracil-55 in the psi GC loop of transfer RNAs. In Pelotomaculum thermopropionicum (strain DSM 13744 / JCM 10971 / SI), this protein is tRNA pseudouridine synthase B.